The sequence spans 390 residues: Exodeoxyribonuclease 7 large subunit (390 aa).

This sequence belongs to the XseA family. Heterooligomer composed of large and small subunits.

It is found in the cytoplasm. The catalysed reaction is Exonucleolytic cleavage in either 5'- to 3'- or 3'- to 5'-direction to yield nucleoside 5'-phosphates.. Functionally, bidirectionally degrades single-stranded DNA into large acid-insoluble oligonucleotides, which are then degraded further into small acid-soluble oligonucleotides. The sequence is that of Exodeoxyribonuclease 7 large subunit from Synechococcus sp. (strain CC9311).